The primary structure comprises 3114 residues: Centromere protein F (3114 aa).

Residues 1 to 481 (MSWALEEWKE…IKENELRRSM (481 aa)) form an interaction with SNAP25 and required for localization to the cytoplasm region. A coiled-coil region spans residues 13–131 (PTRALQKIQE…KSELERSQQA (119 aa)). Residue S106 is modified to Phosphoserine. T144, T151, and T154 each carry phosphothreonine. Y158 carries the post-translational modification Phosphotyrosine. Over residues 211-235 (QASSSVFSWQQEKTPSHLSSNSQRT) the composition is skewed to polar residues. The interval 211 to 236 (QASSSVFSWQQEKTPSHLSSNSQRTP) is disordered. Residues S242 and S276 each carry the phosphoserine modification. The stretch at 280-685 (LDQLKAQNQE…SVEIRNLHNV (406 aa)) forms a coiled coil. 6 positions are modified to phosphoserine: S773, S783, S821, S834, S838, and S876. Coiled coils occupy residues 899-989 (VAET…LNQE) and 1196-1244 (LEVK…IRGD). Phosphoserine occurs at positions 1248, 1255, and 1259. Residues 1549–1646 (VEELESLCEV…ELEVARLQLQ (98 aa)) are a coiled coil. Residues S1651, S1652, and S1654 each carry the phosphoserine modification. Disordered regions lie at residues 1667–1690 (RNES…KHDV) and 1710–1746 (TETG…SECI). Positions 1669 to 1690 (ESCDISKEHTSETTERTPKHDV) are enriched in basic and acidic residues. Phosphoserine is present on S1726. Phosphothreonine is present on T1862. Residues S1868 and S1892 each carry the phosphoserine modification. Coiled-coil stretches lie at residues 1890 to 2078 (NDSW…LQAR) and 2107 to 2891 (LSST…LCSQ). The interval 2026–2351 (LLKDKTHLQE…ERELEIARTN (326 aa)) is interaction with NDE1 and NDEL1. Tandem repeats lie at residues 2111 to 2290 (QEEV…QSLD) and 2293 to 2472 (IEEE…QNLS). The 2 X 177 AA tandem repeats stretch occupies residues 2111 to 2472 (QEEVHQLRRG…ACKAKEQNLS (362 aa)). Residues 2392-2829 (SEKENLTNEL…QAAQEKQKTG (438 aa)) form a sufficient for self-association region. Residues 2392–3017 (SEKENLTNEL…ATRTSPRLAA (626 aa)) form a sufficient for centromere localization region. Residues S2416 and S2417 each carry the phosphoserine modification. K2779 is modified (N6-acetyllysine). Positions 2831–3017 (VMDTKVDELT…ATRTSPRLAA (187 aa)) are sufficient for nuclear localization. Positions 2891 to 2977 (QQSKQDSRGS…AEDTEGTEFE (87 aa)) are disordered. Residues S2900, S2911, S2922, and S2936 each carry the phosphoserine modification. The Nuclear localization signal signature appears at 2919–2936 (KRLSSGQNKASGKRQRSS). Phosphothreonine is present on T2949. Residues S2952, S2998, S3023, and S3026 each carry the phosphoserine modification. The interval 3024–3114 (PLSLGKENLA…SNGSENCKVQ (91 aa)) is disordered. Polar residues predominate over residues 3033-3045 (AESSKPTAGGSRS). S3054, S3079, and S3083 each carry phosphoserine. Basic and acidic residues predominate over residues 3079 to 3089 (SPTDSPREGLR). Residues 3105-3114 (SNGSENCKVQ) are compositionally biased toward polar residues. Position 3111 is a cysteine methyl ester (C3111). C3111 carries the S-farnesyl cysteine lipid modification. Residues 3112–3114 (KVQ) constitute a propeptide, removed in mature form.

Belongs to the centromere protein F family. As to quaternary structure, interacts with and STX4 (via C-terminus). Interacts (via N-terminus) with RBL1, RBL2 and SNAP25. Self-associates. Interacts with CENP-E and BUBR1 (via C-terminus). Interacts (via C-terminus) with NDE1, NDEL1 and RB1. Post-translationally, hyperphosphorylated during mitosis.

Its subcellular location is the cytoplasm. It is found in the perinuclear region. It localises to the nucleus matrix. The protein resides in the chromosome. The protein localises to the centromere. Its subcellular location is the kinetochore. It is found in the cytoskeleton. It localises to the spindle. Functionally, required for kinetochore function and chromosome segregation in mitosis. Required for kinetochore localization of dynein, LIS1, NDE1 and NDEL1. Regulates recycling of the plasma membrane by acting as a link between recycling vesicles and the microtubule network though its association with STX4 and SNAP25. Acts as a potential inhibitor of pocket protein-mediated cellular processes during development by regulating the activity of RB proteins during cell division and proliferation. May play a regulatory or permissive role in the normal embryonic cardiomyocyte cell cycle and in promoting continued mitosis in transformed, abnormally dividing neonatal cardiomyocytes. Interaction with RB directs embryonic stem cells toward a cardiac lineage. Involved in the regulation of DNA synthesis and hence cell cycle progression, via its C-terminus. Has a potential role regulating skeletal myogenesis and in cell differentiation in embryogenesis. Involved in dendritic cell regulation of T-cell immunity against chlamydia. This is Centromere protein F (CENPF) from Homo sapiens (Human).